Here is a 329-residue protein sequence, read N- to C-terminus: Formimidoylglutamase (329 aa).

6 residues coordinate Mn(2+): H133, D159, H161, D163, D253, and D255.

This sequence belongs to the arginase family. The cofactor is Mn(2+).

It catalyses the reaction N-formimidoyl-L-glutamate + H2O = formamide + L-glutamate. It functions in the pathway amino-acid degradation; L-histidine degradation into L-glutamate; L-glutamate from N-formimidoyl-L-glutamate (hydrolase route): step 1/1. Functionally, catalyzes the conversion of N-formimidoyl-L-glutamate to L-glutamate and formamide. In Streptococcus gordonii (strain Challis / ATCC 35105 / BCRC 15272 / CH1 / DL1 / V288), this protein is Formimidoylglutamase.